Here is a 159-residue protein sequence, read N- to C-terminus: Regulatory protein RecX (159 aa).

Belongs to the RecX family.

Its subcellular location is the cytoplasm. Modulates RecA activity. In Acinetobacter baylyi (strain ATCC 33305 / BD413 / ADP1), this protein is Regulatory protein RecX.